The chain runs to 429 residues: Ribosomal RNA small subunit methyltransferase B (429 aa).

Residues 254–260, D277, D303, and D322 contribute to the S-adenosyl-L-methionine site; that span reads CAAPGGK. Catalysis depends on C375, which acts as the Nucleophile. Residues 397 to 419 form a disordered region; sequence ALSETGTPDQPGQQNLPGGEEGD. A compositionally biased stretch (polar residues) spans 400-412; that stretch reads ETGTPDQPGQQNL.

Belongs to the class I-like SAM-binding methyltransferase superfamily. RsmB/NOP family.

It localises to the cytoplasm. The catalysed reaction is cytidine(967) in 16S rRNA + S-adenosyl-L-methionine = 5-methylcytidine(967) in 16S rRNA + S-adenosyl-L-homocysteine + H(+). In terms of biological role, specifically methylates the cytosine at position 967 (m5C967) of 16S rRNA. This chain is Ribosomal RNA small subunit methyltransferase B, found in Salmonella choleraesuis (strain SC-B67).